The sequence spans 207 residues: Ribosomal RNA small subunit methyltransferase G (207 aa).

S-adenosyl-L-methionine is bound by residues Gly-76, Gln-81, 127–128, and Arg-141; that span reads VE.

This sequence belongs to the methyltransferase superfamily. RNA methyltransferase RsmG family.

The protein resides in the cytoplasm. It catalyses the reaction guanosine(527) in 16S rRNA + S-adenosyl-L-methionine = N(7)-methylguanosine(527) in 16S rRNA + S-adenosyl-L-homocysteine. Specifically methylates the N7 position of guanine in position 527 of 16S rRNA. The protein is Ribosomal RNA small subunit methyltransferase G of Neisseria gonorrhoeae (strain ATCC 700825 / FA 1090).